The chain runs to 409 residues: Salivary endonuclease (409 aa).

Positions 1–20 are cleaved as a signal peptide; it reads MHLQLNLCAILLSVLNGIQG. Residues asparagine 37 and asparagine 102 are each glycosylated (N-linked (GlcNAc...) asparagine). The Proton acceptor role is filled by histidine 216. Asparagine 246 contacts Mg(2+). Residues asparagine 351 and asparagine 381 are each glycosylated (N-linked (GlcNAc...) asparagine).

The protein belongs to the DNA/RNA non-specific endonuclease family. Mg(2+) is required as a cofactor. In terms of tissue distribution, salivary gland.

The protein resides in the secreted. Its function is as follows. Hydrolyzes single-stranded and double-stranded DNA with little sequence specificity. Inhibits contact pathway of blood coagulation in the host by preventing activation of coagulation factor XII (F12) triggered by soluble DNA. Modestly up-regulates expression of CSF2, CXCL1 and CXCL8 in cultured human dermal microvascular endothelial cells. At higher doses promotes host neutrophil recruitment at the injection site in mouse model. (Microbial infection) Increases Leishmania major survival in the host by disrupting parasite-induced neutrophil extracellular traps. Exacerbates L.major parasite infectivity and increases cutaneous lesions in mouse model. This Lutzomyia longipalpis (Sand fly) protein is Salivary endonuclease.